A 157-amino-acid chain; its full sequence is Ribosomal RNA large subunit methyltransferase H (157 aa).

Residues L73, G104, and 123–128 (LGPLTL) contribute to the S-adenosyl-L-methionine site.

Belongs to the RNA methyltransferase RlmH family. As to quaternary structure, homodimer.

It is found in the cytoplasm. The catalysed reaction is pseudouridine(1915) in 23S rRNA + S-adenosyl-L-methionine = N(3)-methylpseudouridine(1915) in 23S rRNA + S-adenosyl-L-homocysteine + H(+). In terms of biological role, specifically methylates the pseudouridine at position 1915 (m3Psi1915) in 23S rRNA. In Xylella fastidiosa (strain M23), this protein is Ribosomal RNA large subunit methyltransferase H.